A 336-amino-acid polypeptide reads, in one-letter code: Galactose/methyl galactoside import permease protein MglC (336 aa).

9 helical membrane passes run 17-37, 53-73, 107-127, 128-148, 181-201, 227-247, 257-277, 279-299, and 306-326; these read GIYV…PTFL, IIIA…LSAG, LVIL…GIII, AYLN…VYGI, FRLS…WVLW, VALN…FGGL, TNNL…VGGV, FSGG…FTVI, and IGVN…FAVA.

This sequence belongs to the binding-protein-dependent transport system permease family. AraH/RbsC subfamily. In terms of assembly, the complex is composed of one ATP-binding protein (MglA), two transmembrane proteins (MglC) and a solute-binding protein (MglB).

The protein resides in the cell inner membrane. Functionally, part of the ABC transporter complex MglABC involved in galactose/methyl galactoside import. Probably responsible for the translocation of the substrate across the membrane. This is Galactose/methyl galactoside import permease protein MglC (mglC) from Salmonella typhimurium (strain LT2 / SGSC1412 / ATCC 700720).